Consider the following 519-residue polypeptide: Sugar transport protein MST5 (519 aa).

Topologically, residues 1-18 (MAGGAMVQTVGGKTYPGK) are cytoplasmic. The helical transmembrane segment at 19 to 39 (MTAFVFFTCLVASSGGLIFGY) threads the bilayer. At 40-80 (DIGISGGVTSMDSFLSEFFPSVYAQAKASKDTNQYCKFDSQ) the chain is on the extracellular side. The chain crosses the membrane as a helical span at residues 81-101 (LLTLFTSSLYLAALATSFVAA). Residues 102-110 (WVTRVFGRK) lie on the Cytoplasmic side of the membrane. A helical transmembrane segment spans residues 111–127 (WSMFCGGVTFLAGSALN). Gly128 is a topological domain (extracellular). The helical transmembrane segment at 129 to 149 (AATDVMMLILGRILLGIGVGF) threads the bilayer. Residues 150 to 167 (ANQSVPLYLSEMAPANLR) lie on the Cytoplasmic side of the membrane. A helical membrane pass occupies residues 168–188 (GMLNIGFQLMTTIGILSANLI). Over 189 to 202 (NYATSSIEGGWGWR) the chain is Extracellular. A helical membrane pass occupies residues 203–223 (IGLGLAGVPALIITLGALVLP). The Cytoplasmic segment spans residues 224–295 (DTPNSLIARG…IAILIPCFQQ (72 aa)). A helical membrane pass occupies residues 296–316 (LTGINVIMFYAPVLFLTIGFA). The Extracellular segment spans residues 317 to 321 (GDASL). Residues 322–342 (MSAVITGLVNMFATVVSIISV) traverse the membrane as a helical segment. Residues 343-357 (DRLGRRVLFLQGGTQ) are Cytoplasmic-facing. Residues 358-378 (MFISQVVVGTLIALQFGVAGV) form a helical membrane-spanning segment. The Extracellular portion of the chain corresponds to 379 to 386 (GEMSRSYA). The helical transmembrane segment at 387–407 (ILLVLFICMYVAGFAWSWGPL) threads the bilayer. Residues 408-426 (GWLVPSEVFALEIRSAGQS) lie on the Cytoplasmic side of the membrane. The chain crosses the membrane as a helical span at residues 427–447 (IAVCVNMMLTFVIGQAFLTML). At 448–451 (CHLK) the chain is on the extracellular side. Residues 452–472 (FGLFYFFAGWMLVMTTFVALF) traverse the membrane as a helical segment. At 473-519 (LPETKGVPIEEMNHVWSRHWFWGSYVTAHDVAGAGAGGGGNRRSHNV) the chain is on the cytoplasmic side.

Belongs to the major facilitator superfamily. Sugar transporter (TC 2.A.1.1) family. As to expression, expressed in panicles before heading. Expressed in flowers before pollination.

Its subcellular location is the membrane. Its function is as follows. Mediates active uptake of hexoses by sugar:proton symport. Can transport glucose, xylose and 3-O-methylglucose. May play a role at the early stage of seed development. This chain is Sugar transport protein MST5, found in Oryza sativa subsp. japonica (Rice).